Consider the following 154-residue polypeptide: Protein X (154 aa).

Residues 68–117 (PCALRFTSARCMATTVNAHQILPKVLHKRTLGLPAMSTTDLEAYFKDCLF) are mitochondrial targeting sequence.

It belongs to the orthohepadnavirus protein X family. May form homodimer. May interact with host CEBPA, CFLAR, CREB1, DDB1, E4F1, HBXIP, HSPD1/HSP60, NFKBIA, POLR2E and SMAD4. Interacts with host SMC5-SMC6 complex and induces its degradation. Interacts with host TRPC4AP; leading to prevent ubiquitination of TRPC4AP. Interacts with host PLSCR1; this interaction promotes ubiquitination and degradation of HBx and impairs HBx-mediated cell proliferation. Post-translationally, a fraction may be phosphorylated in insect cells and HepG2 cells, a human hepatoblastoma cell line. Phosphorylated in vitro by host protein kinase C or mitogen-activated protein kinase. N-acetylated in insect cells.

It localises to the host cytoplasm. The protein localises to the host nucleus. The protein resides in the host mitochondrion. Functionally, multifunctional protein that plays a role in silencing host antiviral defenses and promoting viral transcription. Does not seem to be essential for HBV infection. May be directly involved in development of cirrhosis and liver cancer (hepatocellular carcinoma). Most of cytosolic activities involve modulation of cytosolic calcium. The effect on apoptosis is controversial depending on the cell types in which the studies have been conducted. May induce apoptosis by localizing in mitochondria and causing loss of mitochondrial membrane potential. May also modulate apoptosis by binding host CFLAR, a key regulator of the death-inducing signaling complex (DISC). Promotes viral transcription by using the host E3 ubiquitin ligase DDB1 to target the SMC5-SMC6 complex to proteasomal degradation. This host complex would otherwise bind to viral episomal DNA, and prevents its transcription. Moderately stimulates transcription of many different viral and cellular transcription elements. Promoters and enhancers stimulated by HBx contain DNA binding sites for NF-kappa-B, AP-1, AP-2, c-EBP, ATF/CREB, or the calcium-activated factor NF-AT. This Hepatitis B virus genotype A3 (isolate Cameroon/CMR983/1994) (HBV-A) protein is Protein X.